Consider the following 34-residue polypeptide: Toxin GTx1-15 (34 aa).

3 disulfides stabilise this stretch: Cys-2-Cys-17, Cys-9-Cys-23, and Cys-16-Cys-30. The residue at position 34 (Phe-34) is a Phenylalanine amide.

Belongs to the neurotoxin 10 (Hwtx-1) family. 08 (Gtx1-15) subfamily. As to expression, expressed by the venom gland.

It localises to the secreted. In terms of biological role, potent voltage-gated sodium channel blocker. Potently inhibits the voltage-gated sodium channels Nav1.7/SCN9A (IC(50)=0.58-10 nM). Also shows a moderate activity on Nav1.1/SCN1A (IC(50)=6 nM), Nav1.2/SCN2A (IC(50)=5-128 nM), Nav1.3/SCN3A (IC(50)=20.3-170 nM), and Nav1.6/SCN8A (IC(50)=17-20.1 nM). Shows an unclear inhibition of Nav1.4/SCN4A (IC(50)=200 nM to &gt;10 uM), Nav1.5/SCN5A (IC(50)=140 nM to &gt;10 uM) and Nav1.8/SCN10A (IC(50)=68-12200 nM). Weakly blocks the low voltage-gated calcium channels Cav3.1/CACNA1G (30% inhibition of the peak current at 9.8 nM). shows moderate affinity for lipid bilayers. In vivo, when tested on the OD1-induced mouse model of Nav1.7/SCN9A-mediated pain, the toxin is effective when co-administered with OD1, but lacks efficacy when delivered systemically. This Grammostola porteri (Tarantula spider) protein is Toxin GTx1-15.